We begin with the raw amino-acid sequence, 307 residues long: Vesicle-trafficking protein SEC22a (307 aa).

Ser-2 carries the post-translational modification N-acetylserine. Residues 2–187 (SMILSASVIR…ISSAHQRLEP (186 aa)) lie on the Cytoplasmic side of the membrane. Phosphoserine is present on residues Ser-6 and Ser-8. The Longin domain occupies 8 to 119 (SVIRVRDGLP…YCFIEFDNFI (112 aa)). A helical membrane pass occupies residues 188 to 208 (ATLSGIVGFILSLLCGALNLI). Topologically, residues 209-226 (RGFHAIESLLQSDGDDFN) are lumenal. The chain crosses the membrane as a helical span at residues 227–247 (YIIAFFLGTAACLYQCYLLVY). Residues 248 to 253 (YTGWRN) lie on the Cytoplasmic side of the membrane. The chain crosses the membrane as a helical span at residues 254–271 (VKSFLTFGLICLCNMYLY). Residues 272–274 (ELR) are Lumenal-facing. A helical membrane pass occupies residues 275-295 (NLWQLFFHVTVGAFVTLQIWL). Over 296 to 307 (RQAQGKAPDYDV) the chain is Cytoplasmic.

The protein belongs to the synaptobrevin family.

It localises to the endoplasmic reticulum membrane. Functionally, may be involved in vesicle transport between the ER and the Golgi complex. The sequence is that of Vesicle-trafficking protein SEC22a (SEC22A) from Macaca fascicularis (Crab-eating macaque).